Here is a 308-residue protein sequence, read N- to C-terminus: Pseudouridine-5'-phosphate glycosidase (308 aa).

The active-site Proton donor is Glu25. Substrate contacts are provided by Lys86 and Val106. Residue Asp142 participates in Mn(2+) binding. Substrate is bound at residue 144–146 (SAD). The Nucleophile role is filled by Lys163.

The protein belongs to the pseudouridine-5'-phosphate glycosidase family. In terms of assembly, homotrimer. It depends on Mn(2+) as a cofactor.

It carries out the reaction D-ribose 5-phosphate + uracil = psi-UMP + H2O. Catalyzes the reversible cleavage of pseudouridine 5'-phosphate (PsiMP) to ribose 5-phosphate and uracil. Functions biologically in the cleavage direction, as part of a pseudouridine degradation pathway. This Symbiobacterium thermophilum (strain DSM 24528 / JCM 14929 / IAM 14863 / T) protein is Pseudouridine-5'-phosphate glycosidase.